Here is a 5233-residue protein sequence, read N- to C-terminus: E3 ubiquitin-protein ligase highwire (5233 aa).

The segment at 197–230 (VVGGPGLPAEKRPRRDSANSDADSDTEEPTEREP) is disordered. A compositionally biased stretch (basic and acidic residues) spans 205–214 (AEKRPRRDSA). 2 positions are modified to phosphoserine: Ser213 and Ser216. RCC1 repeat units lie at residues 615–666 (NGRV…ALLV), 669–724 (DGTV…FVTK), and 768–818 (KGQL…DKRL). A disordered region spans residues 680-700 (RGEDGDSSKNRRQPKAVKPKK). Positions 689 to 700 (NRRQPKAVKPKK) are enriched in basic residues. Residues 900–950 (TELKPPPSDVQQRQQRSKTLIMRRKERKGELETGAAGGGAATPTDLDKDPP) are disordered. The span at 908–917 (DVQQRQQRSK) shows a compositional bias: polar residues. RCC1 repeat units lie at residues 931-983 (ETGA…VLTL), 984-1033 (AGEV…LLTS), and 1035-1084 (GMVY…TVAP). Disordered regions lie at residues 1051–1109 (LPSD…EMPP) and 1287–1327 (AAAA…PPQL). Residues 1092 to 1103 (RSQSPANVQPSG) show a composition bias toward polar residues. Positions 1287–1302 (AAAAAVAAPGTPVSAG) are enriched in low complexity. The PHR domain 1 stretch occupies residues 1436-1587 (NRFDNFGGGW…GQIPAILYRL (152 aa)). The interval 1681–1718 (SSTSVATGGGSNAAHGSGVVTTAKSVQSKPNKDKNTPR) is disordered. A compositionally biased stretch (polar residues) spans 1699–1709 (VVTTAKSVQSK). Residues 2014 to 2169 (ARFARCDVSR…GQLPCILYYS (156 aa)) form a PHR domain 2 region. Disordered stretches follow at residues 2329-2353 (SADL…VPIN) and 2580-2604 (NGAG…NTHQ). Positions 2336 to 2350 (QSQSVSQSQSQSQSV) are enriched in low complexity. The segment at 2885 to 4082 (AEVSAPGPNL…FVSSLNPTGG (1198 aa)) is required for interaction with Rae1. Residues 2906–3000 (WGGMAPPPRI…LEEVYRVDVK (95 aa)) form a Filamin repeat. Disordered stretches follow at residues 3005–3024 (PPPT…SKLR), 3117–3210 (KGVG…EPEQ), 3277–3333 (GGQD…ASET), 3348–3378 (TTTG…PMGP), 3551–3587 (PRLL…DLGR), and 3901–3936 (ASLA…APPV). Positions 3176–3191 (KHADLAEREAQVQEER) are enriched in basic and acidic residues. A compositionally biased stretch (acidic residues) spans 3192-3210 (EKEEEQVDDEDADDREPEQ). The segment covering 3282–3292 (PRGNGNRSQQE) has biased composition (polar residues). Over residues 3348–3371 (TTTGQGEQQSELQLATTSTASSAS) the composition is skewed to low complexity. Residues 3917–3932 (QHHQQQQMNLQLQQHQ) are compositionally biased toward low complexity. The DOC domain maps to 4195 to 4374 (HNQVHSVATG…KHQPHLRLSH (180 aa)). Disordered regions lie at residues 4633-4655 (ASTG…GAVL) and 4680-4702 (LRSR…ALPP). The segment covering 4638–4652 (SGSGGVSGSSSGNGG) has biased composition (gly residues). 10 residues coordinate Zn(2+): Cys4991, Cys4994, Cys5009, His5011, His5014, Cys5017, Cys5038, Cys5041, Cys5101, and Cys5104. An RING-type; atypical zinc finger spans residues 4991–5042 (CMICFVEALSCAPSIHLECGHVFHYHCCKAVLEKRWSGPRITFGFSLCPICK). Positions 5096–5231 (YAYYVCFKCQ…LGCGVCRNAQ (136 aa)) are tandem cysteine domain. Residue Cys5115 is part of the active site. Residues Cys5130, Cys5133, Cys5142, His5145, Cys5154, Cys5157, and Cys5158 each contribute to the Zn(2+) site. Cys5165 is a catalytic residue. 7 residues coordinate Zn(2+): Cys5172, Cys5175, Cys5193, Cys5207, His5213, Cys5224, and Cys5227.

Belongs to the RING-Cys relay (RCR) family. As to quaternary structure, component of an E3 ubiquitin ligase complex composed of hiw, Rae1 and Fsn. Interacts with Rae1; the interaction with Rae1 may protect hiw from autophagy-mediated degradation. As to expression, express throughout the nervous system. Stage 13 embryos show expression in the central nervous system (CNS) at the longitudinal axon tracts around which the synaptic neuropil forms. Expression outside the CNS starts at stage 16 in presynaptic terminals at the periactive zone which surround the active zone. Expression at neuromuscular junctions (NMJ) and in the CNS is also seen in third instar larvae (at protein level).

Its subcellular location is the synapse. It localises to the cell projection. It is found in the axon. The catalysed reaction is [E2 ubiquitin-conjugating enzyme]-S-ubiquitinyl-L-cysteine + [acceptor protein]-L-threonine = [E2 ubiquitin-conjugating enzyme]-L-cysteine + [acceptor protein]-3-O-ubiquitinyl-L-threonine.. Its pathway is protein modification; protein ubiquitination. Atypical E3 ubiquitin-protein ligase which specifically mediates ubiquitination of threonine and serine residues on target proteins, instead of ubiquitinating lysine residues. Shows esterification activity towards both threonine and serine, with a preference for threonine, and acts via two essential catalytic cysteine residues that relay ubiquitin to its substrate via thioester intermediates. Required in the presynaptic motoneuron to down-regulate the levels of wnd and restrain synaptic terminal growth at the neuromuscular junction (NMJ) together with Rae1 and Fsn. This chain is E3 ubiquitin-protein ligase highwire, found in Drosophila melanogaster (Fruit fly).